The following is a 307-amino-acid chain: Metapyrocatechase (307 aa).

VOC domains follow at residues 7–122 (RPGH…LYAD) and 150–269 (RFDH…VFCG). Residues histidine 153, histidine 214, and glutamate 265 each coordinate Fe cation.

The protein belongs to the extradiol ring-cleavage dioxygenase family. Homotetramer. It depends on Fe(2+) as a cofactor.

It catalyses the reaction catechol + O2 = (2Z,4E)-2-hydroxy-6-oxohexa-2,4-dienoate + H(+). It functions in the pathway aromatic compound metabolism; benzoate degradation via hydroxylation. This Pseudomonas sp. (strain CF600) protein is Metapyrocatechase (dmpB).